The sequence spans 501 residues: Aldehyde dehydrogenase family 2 member C4 (501 aa).

Residue 245–250 coordinates NAD(+); sequence GSTDVG. E268 serves as the catalytic Proton acceptor. Catalysis depends on C302, which acts as the Nucleophile.

This sequence belongs to the aldehyde dehydrogenase family. In terms of assembly, homotetramer.

It is found in the cytoplasm. The protein localises to the cytosol. It catalyses the reaction an aldehyde + NAD(+) + H2O = a carboxylate + NADH + 2 H(+). Functionally, involved in ferulic acid and sinapic acid biosynthesis by oxidation of conyferylaldehyde and sinapaldehyde, respectively. Can oxidize L-lactaldehyde. Possesses activity on acetaldehyde and glycolaldehyde in vitro. This is Aldehyde dehydrogenase family 2 member C4 (ALDH2C4) from Arabidopsis thaliana (Mouse-ear cress).